The chain runs to 412 residues: G-protein coupled receptor homolog UL33 (412 aa).

The Virion surface portion of the chain corresponds to 1–35; the sequence is MDTIIHNTTNRSTDTPHVNITCNITEPLSAIRTTE. 3 N-linked (GlcNAc...) asparagine; by host glycosylation sites follow: Asn7, Asn19, and Asn23. A helical membrane pass occupies residues 36–56; that stretch reads AVINTFIIFVGGPLNAIVLIT. Residues 57–80 are Intravirion-facing; it reads QLLTNRVLGYSTPTIYMTNLYSTN. A helical membrane pass occupies residues 81–101; sequence FLTLTVLPFIVLSNQWLLPAS. Residues 102 to 106 lie on the Virion surface side of the membrane; sequence VASCK. Cys105 and Cys188 are oxidised to a cystine. A helical membrane pass occupies residues 107–127; that stretch reads FLSVIYYSSCTVGFATVALIA. Topologically, residues 128–147 are intravirion; sequence ADRYRVLHKRTYARQSYRST. The chain crosses the membrane as a helical span at residues 148–168; the sequence is YIILLLTWFAGLIFSMPAAVY. The Virion surface portion of the chain corresponds to 169-206; that stretch reads TTVVIHNGTNGQSSNGHATCVLYFIADEVYTVLLSWKV. The helical transmembrane segment at 207-227 threads the bilayer; sequence LLTLVWGAAPVIMMTWFYAFF. Residues 228–244 lie on the Intravirion side of the membrane; sequence YSTVQRASQKQRSRTLT. Residues 245–265 traverse the membrane as a helical segment; sequence FVSVLLISFVALQTPYVSIMI. The Virion surface segment spans residues 266–292; that stretch reads FNSYATAAWPMDCEHLTLRRTIGTLSR. The chain crosses the membrane as a helical span at residues 293-313; that stretch reads LVPHLHCLINPILYALLGHDF. Over 314–412 the chain is Intravirion; that stretch reads LQRMRQCFRG…SQSHHNLSGV (99 aa). Residues 377 to 412 form a disordered region; it reads NFPSGTWKGGQKTASNDTSTKIPHRLSQSHHNLSGV. A compositionally biased stretch (polar residues) spans 388–397; it reads KTASNDTSTK.

Belongs to the G-protein coupled receptor 1 family. Heterodimerizes with US28.

The protein localises to the virion. It localises to the host cell membrane. Its subcellular location is the host cytoplasm. Functionally, G-protein-coupled receptor (vGPCR) that constitutively activates multiple oncogenic signaling pathways including STAT3, AP-1, phospholipase C, NF-kappa-B or cAMP-responsive element (CRE) pathways. Plays an important role in viral reactivation from latency through activation of host CREB1, facilitating its recruitment to the viral major immediate early (MIE) genes. In turn, expression of the MIE-driven genes such as UL123 are de-repressed. Also facilitates virus dissemination via the extracellular and cell-to-cell route. This Human cytomegalovirus (strain Merlin) (HHV-5) protein is G-protein coupled receptor homolog UL33 (UL33).